The chain runs to 457 residues: Chromosomal replication initiator protein DnaA (457 aa).

The tract at residues 1 to 75 (MDAQLNNLWE…ALKIVTSRKF (75 aa)) is domain I, interacts with DnaA modulators. Positions 75 to 118 (FKIEFYLESDLEEEKENEEKQKEEKKENTNDVDGSIVVSDEMSA) are domain II. The tract at residues 119–335 (TLNPKYTFQS…GALIRIIAYS (217 aa)) is domain III, AAA+ region. Gly-163, Gly-165, Lys-166, and Thr-167 together coordinate ATP. Residues 336–457 (SLTNRDVSVD…NDITKKLTQK (122 aa)) form a domain IV, binds dsDNA region.

Belongs to the DnaA family. Oligomerizes as a right-handed, spiral filament on DNA at oriC.

Its subcellular location is the cytoplasm. Its function is as follows. Plays an essential role in the initiation and regulation of chromosomal replication. ATP-DnaA binds to the origin of replication (oriC) to initiate formation of the DNA replication initiation complex once per cell cycle. Binds the DnaA box (a 9 base pair repeat at the origin) and separates the double-stranded (ds)DNA. Forms a right-handed helical filament on oriC DNA; dsDNA binds to the exterior of the filament while single-stranded (ss)DNA is stabiized in the filament's interior. The ATP-DnaA-oriC complex binds and stabilizes one strand of the AT-rich DNA unwinding element (DUE), permitting loading of DNA polymerase. After initiation quickly degrades to an ADP-DnaA complex that is not apt for DNA replication. Binds acidic phospholipids. The chain is Chromosomal replication initiator protein DnaA from Clostridium perfringens (strain ATCC 13124 / DSM 756 / JCM 1290 / NCIMB 6125 / NCTC 8237 / Type A).